The sequence spans 414 residues: Tyrosine--tRNA ligase (414 aa).

Y40 is a binding site for L-tyrosine. Positions 45–54 (ATAASLHVGH) match the 'HIGH' region motif. L-tyrosine-binding residues include Y175 and Q179. Residues 235-239 (KMGKS) carry the 'KMSKS' region motif. K238 lines the ATP pocket. An S4 RNA-binding domain is found at 349–414 (LTVVQLLAQT…KKKHRMVQLG (66 aa)).

This sequence belongs to the class-I aminoacyl-tRNA synthetase family. TyrS type 1 subfamily. Homodimer.

The protein resides in the cytoplasm. It carries out the reaction tRNA(Tyr) + L-tyrosine + ATP = L-tyrosyl-tRNA(Tyr) + AMP + diphosphate + H(+). Catalyzes the attachment of tyrosine to tRNA(Tyr) in a two-step reaction: tyrosine is first activated by ATP to form Tyr-AMP and then transferred to the acceptor end of tRNA(Tyr). In Paracoccus denitrificans (strain Pd 1222), this protein is Tyrosine--tRNA ligase.